We begin with the raw amino-acid sequence, 535 residues long: Tetrathionate hydrolase (535 aa).

Positions 1 to 39 (MNLKILVGLFILGIIILSAMTFLNFTTIVAQDKGDQQPK) are cleaved as a signal peptide. N50 carries N-linked (GlcNAc...) asparagine glycosylation.

The protein belongs to the tetrathionate hydrolase family. In terms of assembly, monomer and homodimer; in equilibrium.

It is found in the cell surface. The enzyme catalyses tetrathionate + H2O = sulfur + thiosulfate + sulfate + H(+). Its function is as follows. Catalyzes the hydrolysis of tetrathionate to generate elemental sulfur, thiosulfate and sulfate. This is Tetrathionate hydrolase from Acidianus ambivalens (Desulfurolobus ambivalens).